The primary structure comprises 319 residues: Extracellular phospholipase A1 (319 aa).

An N-terminal signal peptide occupies residues 1–24 (MSMPLSFTSAVSPVAAIPTPRAAA).

It catalyses the reaction a 1,2-diacyl-sn-glycero-3-phosphocholine + H2O = a 2-acyl-sn-glycero-3-phosphocholine + a fatty acid + H(+). The chain is Extracellular phospholipase A1 (phlA) from Serratia liquefaciens.